Here is a 365-residue protein sequence, read N- to C-terminus: Probable dual-specificity RNA methyltransferase RlmN (365 aa).

Glu-99 (proton acceptor) is an active-site residue. The 240-residue stretch at Gln-105–Asp-344 folds into the Radical SAM core domain. A disulfide bridge connects residues Cys-112 and Cys-349. 3 residues coordinate [4Fe-4S] cluster: Cys-119, Cys-123, and Cys-126. S-adenosyl-L-methionine-binding positions include Gly-171–Glu-172, Ser-203, Ser-227–His-229, and Asn-305. Catalysis depends on Cys-349, which acts as the S-methylcysteine intermediate.

The protein belongs to the radical SAM superfamily. RlmN family. The cofactor is [4Fe-4S] cluster.

Its subcellular location is the cytoplasm. It carries out the reaction adenosine(2503) in 23S rRNA + 2 reduced [2Fe-2S]-[ferredoxin] + 2 S-adenosyl-L-methionine = 2-methyladenosine(2503) in 23S rRNA + 5'-deoxyadenosine + L-methionine + 2 oxidized [2Fe-2S]-[ferredoxin] + S-adenosyl-L-homocysteine. The enzyme catalyses adenosine(37) in tRNA + 2 reduced [2Fe-2S]-[ferredoxin] + 2 S-adenosyl-L-methionine = 2-methyladenosine(37) in tRNA + 5'-deoxyadenosine + L-methionine + 2 oxidized [2Fe-2S]-[ferredoxin] + S-adenosyl-L-homocysteine. In terms of biological role, specifically methylates position 2 of adenine 2503 in 23S rRNA and position 2 of adenine 37 in tRNAs. In Lactococcus lactis subsp. cremoris (strain MG1363), this protein is Probable dual-specificity RNA methyltransferase RlmN.